The sequence spans 602 residues: ATP-dependent RNA helicase DeaD (602 aa).

Residues 6-34 (MTFSSFGLNSCIITALNDIGYVQPSPIQA) carry the Q motif motif. In terms of domain architecture, Helicase ATP-binding spans 37 to 208 (IPYLIKGKDV…RRFMKNPKEI (172 aa)). Position 50–57 (50–57 (AQTGSGKT)) interacts with ATP. The DEAD box motif lies at 156 to 159 (DEAD). A Helicase C-terminal domain is found at 231–378 (KTDALIRFLE…EVNLPKSDFL (148 aa)).

Belongs to the DEAD box helicase family. DeaD/CsdA subfamily.

The protein resides in the cytoplasm. It catalyses the reaction ATP + H2O = ADP + phosphate + H(+). DEAD-box RNA helicase involved in various cellular processes at low temperature, including ribosome biogenesis, mRNA degradation and translation initiation. The polypeptide is ATP-dependent RNA helicase DeaD (Buchnera aphidicola subsp. Baizongia pistaciae (strain Bp)).